The sequence spans 407 residues: Tyrosine--tRNA ligase (407 aa).

Positions 47-56 match the 'HIGH' region motif; that stretch reads PTAPDLHLGA. Residues 231 to 235 carry the 'KMSKS' region motif; the sequence is KMSKS. Lys234 contributes to the ATP binding site. An S4 RNA-binding domain is found at 342-403; sequence PRLSQLLVQV…GKRHFARVAL (62 aa).

The protein belongs to the class-I aminoacyl-tRNA synthetase family. TyrS type 2 subfamily. In terms of assembly, homodimer.

Its subcellular location is the cytoplasm. It carries out the reaction tRNA(Tyr) + L-tyrosine + ATP = L-tyrosyl-tRNA(Tyr) + AMP + diphosphate + H(+). Catalyzes the attachment of tyrosine to tRNA(Tyr) in a two-step reaction: tyrosine is first activated by ATP to form Tyr-AMP and then transferred to the acceptor end of tRNA(Tyr). In Acidithiobacillus ferrooxidans (Thiobacillus ferrooxidans), this protein is Tyrosine--tRNA ligase.